Consider the following 237-residue polypeptide: CD99 antigen-like protein 2 (237 aa).

The N-terminal stretch at 1–25 is a signal peptide; the sequence is MVARLTAFLVCLVFSLATLVQRGYG. Topologically, residues 26–161 are extracellular; it reads DTDGFNLEDA…PGSGISTETG (136 aa). A disordered region spans residues 47-157; the sequence is DHFSTTTRRP…SNDDPGSGIS (111 aa). 2 stretches are compositionally biased toward low complexity: residues 51–66 and 74–84; these read TTTRRPVTTRAPANPA and TTTTRRPGTTR. Residues 102-111 show a composition bias toward basic and acidic residues; the sequence is DDRNDLDGPK. O-linked (Xyl...) (chondroitin sulfate) serine glycosylation occurs at Ser154. A helical membrane pass occupies residues 162 to 182; sequence TIAGVASALAMALIGAVSSYI. Residues 183 to 237 are Cytoplasmic-facing; sequence SYQQKKFCFSIQQGLNADYVKGENLEAVVCEEPQVTYSKQETQSAEPPPPEPPRI. Polar residues predominate over residues 218–227; the sequence is TYSKQETQSA. The segment at 218–237 is disordered; sequence TYSKQETQSAEPPPPEPPRI. Positions 228–237 are enriched in pro residues; it reads EPPPPEPPRI.

The protein belongs to the CD99 family. Post-translationally, O-glycosylated. As to expression, highly expressed in the nervous system, including brain, dentate nucleus of hippocampus, granular and Purkinje cells of cerebellum, brain stem nucleus and choroid plexus. Expressed in peripheral blood T- and B-cells and neutrophils (at protein level). Almost undetectable in bone marrow-derived neutrophils (at protein level). Also expressed in thymocytes (at protein level) with higher expression in cortical thymocytes than in medullary thymocytes. Expressed at high levels in testis (mostly in germ cells and Sertoli cells) and ovary (mostly in granulosa cells). Expressed in lung, heart, kidney and liver (at protein level); however, expression in heart, kidney and liver seems restricted to endothelial cells (at protein level). Highly expressed in endothelial cells and to a lower level in vascular smooth muscle cells (at protein level). Low expression in spleen.

The protein localises to the cell membrane. It localises to the cell junction. The protein resides in the secreted. Its function is as follows. Plays a role in a late step of leukocyte extravasation helping cells to overcome the endothelial basement membrane. Acts at the same site as, but independently of, PECAM1. Homophilic adhesion molecule, but these interactions may not be required for cell aggregation. In Mus musculus (Mouse), this protein is CD99 antigen-like protein 2 (Cd99l2).